Here is a 215-residue protein sequence, read N- to C-terminus: Fanconi anemia core complex-associated protein 24 (215 aa).

As to quaternary structure, belongs to the multisubunit FA complex composed of FANCA, FANCB, FANCC, FANCE, FANCF, FANCG, FANCL/PHF9, FANCM and FAAP24. Interacts with FANCM.

The protein resides in the nucleus. Plays a role in DNA repair through recruitment of the FA core complex to damaged DNA. Regulates FANCD2 monoubiquitination upon DNA damage. Induces chromosomal instability as well as hypersensitivity to DNA cross-linking agents, when repressed. Targets FANCM/FAAP24 complex to the DNA, preferentially to single strand DNA. This chain is Fanconi anemia core complex-associated protein 24, found in Bos taurus (Bovine).